A 438-amino-acid polypeptide reads, in one-letter code: Keratin, type I cytoskeletal 13 (438 aa).

The interval 1-95 (MSCRFQSSSM…SVDGGLLSGN (95 aa)) is head. Omega-N-methylarginine occurs at positions 27 and 35. The coil stretch occupies residues 96–131 (EKITMQNLNDRLASYLEKVRALEAANADLEVKIRDW). Residues 96–408 (EKITMQNLND…SLLEGQDAKM (313 aa)) enclose the IF rod domain. The linker 1 stretch occupies residues 132-150 (HLKQSPTSPERDYSAYYKT). The interval 151–242 (IEELRIKILE…KNHEEEMKEF (92 aa)) is coil 1B. A linker 12 region spans residues 243 to 265 (SNQAVGQVNVEMDATPGIDLTRV). The interval 266–404 (LAEMREQYEA…ATYRSLLEGQ (139 aa)) is coil 2. Residues 405–438 (DAKMTGFNTGGNSTTTSNTSTSPSTSGRPDFRKY) are tail. A disordered region spans residues 408–438 (MTGFNTGGNSTTTSNTSTSPSTSGRPDFRKY). Positions 409 to 431 (TGFNTGGNSTTTSNTSTSPSTSG) are enriched in low complexity.

This sequence belongs to the intermediate filament family. As to quaternary structure, heterotetramer of two type I and two type II keratins. Post-translationally, O-glycosylated; glycans consist of single N-acetylglucosamine residues.

Type 1 keratin. Maintains postnatal tongue mucosal cell homeostasis and tissue organization in response to mechanical stress, potentially via regulation of the G1/S phase cyclins CCNE1 and CCNE2. The polypeptide is Keratin, type I cytoskeletal 13 (Rattus norvegicus (Rat)).